The sequence spans 456 residues: Bestrophin homolog 18 (456 aa).

4 helical membrane-spanning segments follow: residues 29–49 (WSAIWIQYSVWLGLYFLVSAI), 83–103 (GFFIAGVLRRFWYLYDIIGFI), 234–254 (IIYPTIVCLAVHMYFFVGILA), and 267–287 (MIDLVFPFMTSIQFVFYMGWL). Residues 416–456 (ASSSRSLERQRSPGSFRMETLTPGSPTNTPIEPIDKIDKKK) form a disordered region.

It belongs to the anion channel-forming bestrophin (TC 1.A.46) family. Calcium-sensitive chloride channel subfamily. As to quaternary structure, forms oligomers.

It is found in the cell membrane. Functionally, forms chloride channels. The sequence is that of Bestrophin homolog 18 (best-18) from Caenorhabditis elegans.